A 202-amino-acid chain; its full sequence is Inner membrane-spanning protein YciB (202 aa).

Transmembrane regions (helical) follow at residues 47–67 (ILLA…WVHF), 75–95 (MLWV…AFQN), 101–121 (WKPT…AFIL), 146–166 (LSWI…AFNF), and 174–194 (FKLF…GMLL).

Belongs to the YciB family.

The protein localises to the cell inner membrane. Its function is as follows. Plays a role in cell envelope biogenesis, maintenance of cell envelope integrity and membrane homeostasis. This Dechloromonas aromatica (strain RCB) protein is Inner membrane-spanning protein YciB.